Reading from the N-terminus, the 403-residue chain is Tryptophan synthase beta chain (403 aa).

At K96 the chain carries N6-(pyridoxal phosphate)lysine.

This sequence belongs to the TrpB family. In terms of assembly, tetramer of two alpha and two beta chains. Pyridoxal 5'-phosphate is required as a cofactor.

It carries out the reaction (1S,2R)-1-C-(indol-3-yl)glycerol 3-phosphate + L-serine = D-glyceraldehyde 3-phosphate + L-tryptophan + H2O. It functions in the pathway amino-acid biosynthesis; L-tryptophan biosynthesis; L-tryptophan from chorismate: step 5/5. The beta subunit is responsible for the synthesis of L-tryptophan from indole and L-serine. This is Tryptophan synthase beta chain from Ralstonia nicotianae (strain ATCC BAA-1114 / GMI1000) (Ralstonia solanacearum).